A 434-amino-acid chain; its full sequence is MKKGAKRKGVSKAGRKAAVAETQNDEVIEETTKTTQEESQQHEEEVVDEVKENGEEEEAKGDQEEEEDAKPDSLEEDEENQEDEVKAEEVKEEVEKKPVARRGGKRKRATKKDTEIKDEKKPVPKAKKPRAAKVKEEPVYFEEKRSLEDLWKVAFPVGTEWDQLDALYEFNWDFQNLEEALEEGGKLYGKKVYVFGCTEPQLVPYKGANKIVHVPAVVVIESPFPPSDKIGITSVQREVEEIIPMKKMKMDWLPYIPIEKRDRQVDKMNSQIFTLGCTQRRSALRHMKEDQLKKFEYCLPYFYQPFKEDELEQSTEVQIMFPSEPPVVCEFDWEFDELQEFVDKLVEEEALPAEQADEFKEYVKEQVRAAKKANREAKDARKKAIEEMSEDTKQAFQKMKFYKFYPQPSPDTPDVSGVQSPFINRYYGKAHEVL.

A Nuclear localization signal 1 motif is present at residues methionine 1–lysine 8. Positions methionine 1–arginine 15 are enriched in basic residues. The tract at residues methionine 1 to alanine 131 is disordered. The segment covering glutamate 30–asparagine 53 has biased composition (basic and acidic residues). A compositionally biased stretch (acidic residues) spans glycine 54–glutamate 82. A compositionally biased stretch (basic and acidic residues) spans aspartate 83–proline 98. A Nuclear localization signal 2 motif is present at residues glutamate 95–arginine 102. Positions valine 99–threonine 110 are enriched in basic residues. Residues lysine 111–proline 122 are compositionally biased toward basic and acidic residues. Positions valine 363–glutamine 394 form a coiled coil. The Nuclear localization signal 3 signature appears at alanine 370–alanine 377.

It is found in the nucleus. It localises to the nucleolus. Functionally, essential protein required for basal thermotolerance, especially during heat-induced chromocentre decondensation, thus regulating transcriptional gene silencing (TGS). The chain is Protein HEAT INTOLERANT 4 from Arabidopsis thaliana (Mouse-ear cress).